We begin with the raw amino-acid sequence, 271 residues long: Type III pantothenate kinase (271 aa).

6 to 13 (DVRNTNIV) is an ATP binding site. 109-112 (GADR) provides a ligand contact to substrate. Residue aspartate 111 is the Proton acceptor of the active site. K(+) is bound at residue aspartate 131. Position 134 (threonine 134) interacts with ATP. Threonine 186 is a binding site for substrate.

Belongs to the type III pantothenate kinase family. In terms of assembly, homodimer. Requires NH4(+) as cofactor. It depends on K(+) as a cofactor.

It localises to the cytoplasm. It catalyses the reaction (R)-pantothenate + ATP = (R)-4'-phosphopantothenate + ADP + H(+). It functions in the pathway cofactor biosynthesis; coenzyme A biosynthesis; CoA from (R)-pantothenate: step 1/5. Functionally, catalyzes the phosphorylation of pantothenate (Pan), the first step in CoA biosynthesis. This is Type III pantothenate kinase from Rhodococcus jostii (strain RHA1).